The sequence spans 461 residues: Nuclear distribution protein PAC1 (461 aa).

One can recognise a LisH domain in the interval Gln-9–Glu-41. 7 WD repeats span residues Ser-114–Lys-155, His-157–Arg-197, Gly-201–Thr-248, Gly-251–Lys-290, Gln-312–Leu-355, Gly-357–Lys-396, and Ala-401–Arg-457.

Belongs to the WD repeat LIS1/nudF family. As to quaternary structure, self-associates. Interacts with NDL1 and dynein.

The protein localises to the cytoplasm. The protein resides in the cytoskeleton. It localises to the spindle pole. Functionally, positively regulates the activity of the minus-end directed microtubule motor protein dynein. May enhance dynein-mediated microtubule sliding by targeting dynein to the microtubule plus end. Required for nuclear migration during vegetative growth as well as development. Required for retrograde early endosome (EE) transport from the hyphal tip. Required for localization of dynein to the mitotic spindle poles. Recruits additional proteins to the dynein complex at SPBs. In Arthroderma otae (strain ATCC MYA-4605 / CBS 113480) (Microsporum canis), this protein is Nuclear distribution protein PAC1.